A 177-amino-acid polypeptide reads, in one-letter code: R-phycoerythrin beta chain (177 aa).

Residues Cys-50 and Cys-61 each coordinate phycourobilin. Asn-72 is subject to N4-methylasparagine. Residues Cys-82 and Cys-158 each coordinate (2R,3E)-phycoerythrobilin.

This sequence belongs to the phycobiliprotein family. Heterodimer of an alpha and a beta chain. Contains two covalently linked phycoerythrobilin chromophores and one covalently linked phycourobilin chromophore.

The protein localises to the plastid. Its subcellular location is the chloroplast thylakoid membrane. In terms of biological role, light-harvesting photosynthetic bile pigment-protein from the phycobiliprotein complex. The protein is R-phycoerythrin beta chain (cpeB) of Pyropia haitanensis (Red seaweed).